We begin with the raw amino-acid sequence, 461 residues long: Carbamoyl phosphate synthase arginine-specific small chain (461 aa).

In terms of domain architecture, Glutamine amidotransferase type-1 spans 240–427; the sequence is HVALIDCGVK…LENVQMYKDN (188 aa). Catalysis depends on Cys-316, which acts as the Nucleophile. Catalysis depends on residues His-400 and Glu-402.

Belongs to the CarA family. In terms of assembly, heterodimer composed of 2 chains; the small (or glutamine) chain promotes the hydrolysis of glutamine to ammonia, which is used by the large (or ammonia) chain to synthesize carbamoyl phosphate.

It localises to the cytoplasm. The enzyme catalyses hydrogencarbonate + L-glutamine + 2 ATP + H2O = carbamoyl phosphate + L-glutamate + 2 ADP + phosphate + 2 H(+). It catalyses the reaction L-glutamine + H2O = L-glutamate + NH4(+). Its pathway is amino-acid biosynthesis; L-arginine biosynthesis; carbamoyl phosphate from bicarbonate: step 1/1. Its function is as follows. Small subunit of the arginine-specific carbamoyl phosphate synthase (CPSase). CPSase catalyzes the formation of carbamoyl phosphate from the ammonia moiety of glutamine, carbonate, and phosphate donated by ATP, constituting the first step of 2 biosynthetic pathways, one leading to arginine and/or urea and the other to pyrimidine nucleotides. The small subunit (glutamine amidotransferase) binds and cleaves glutamine to supply the large subunit with the substrate ammonia. This Chaetomium globosum (strain ATCC 6205 / CBS 148.51 / DSM 1962 / NBRC 6347 / NRRL 1970) (Soil fungus) protein is Carbamoyl phosphate synthase arginine-specific small chain (CPA1).